A 369-amino-acid chain; its full sequence is Phospho-N-acetylmuramoyl-pentapeptide-transferase (369 aa).

Helical transmembrane passes span 2–22 (IAIL…TPFF), 54–74 (GLVI…FLGL), 80–100 (GLLV…DDIL), 113–133 (FYKV…TFLV), 158–178 (ALFS…LLWI), 195–215 (LDGL…VIGF), 241–261 (PLDM…FLWW), 268–288 (IMMG…LSIL), 293–313 (LLFL…ILQI), and 347–367 (FWII…ADWL).

This sequence belongs to the glycosyltransferase 4 family. MraY subfamily. The cofactor is Mg(2+).

It is found in the cell membrane. It catalyses the reaction UDP-N-acetyl-alpha-D-muramoyl-L-alanyl-gamma-D-glutamyl-meso-2,6-diaminopimeloyl-D-alanyl-D-alanine + di-trans,octa-cis-undecaprenyl phosphate = di-trans,octa-cis-undecaprenyl diphospho-N-acetyl-alpha-D-muramoyl-L-alanyl-D-glutamyl-meso-2,6-diaminopimeloyl-D-alanyl-D-alanine + UMP. It participates in cell wall biogenesis; peptidoglycan biosynthesis. Its function is as follows. Catalyzes the initial step of the lipid cycle reactions in the biosynthesis of the cell wall peptidoglycan: transfers peptidoglycan precursor phospho-MurNAc-pentapeptide from UDP-MurNAc-pentapeptide onto the lipid carrier undecaprenyl phosphate, yielding undecaprenyl-pyrophosphoryl-MurNAc-pentapeptide, known as lipid I. The protein is Phospho-N-acetylmuramoyl-pentapeptide-transferase of Tropheryma whipplei (strain TW08/27) (Whipple's bacillus).